We begin with the raw amino-acid sequence, 305 residues long: ATP synthase subunit gamma, mitochondrial (305 aa).

The protein belongs to the ATPase gamma chain family. F-type ATPases have 2 components, F(1) - the catalytic core - and F(o) - the membrane proton channel. F(1) has five subunits: alpha(3), beta(3), gamma(1), delta(1), epsilon(1), plus the additional subunit P18 (Tb427.05.1710) that is not present in F(1)F(o) ATP synthase from metazoa. Subunit P18 (Tb927.5.1710) interacts with the alpha subunit with a 1:1 stoichiometry; the interaction is direct. Subunit gamma is part of the central stalk. F(o) has three main subunits: a, b and c. The trypanosomal ATPase complex contains additional subunits that are not present in the F(1)F(o) ATP synthase from metazoa.

It is found in the mitochondrion. It localises to the mitochondrion inner membrane. Its function is as follows. Mitochondrial membrane ATP synthase (F(1)F(o) ATP synthase) produces ATP from ADP in the presence of a proton gradient across the membrane which is generated by electron transport complexes of the respiratory chain. F-type ATPases consist of two structural domains, F(1) - containing the extramembraneous catalytic core, and F(o) - containing the membrane proton channel, linked together by a central stalk and a peripheral stalk. During catalysis, ATP synthesis in the catalytic domain of F(1) is coupled via a rotary mechanism of the central stalk subunits to proton translocation. Subunits alpha and beta form the catalytic core in F(1). Rotation of the central stalk against the surrounding alpha(3)beta(3) subunits leads to hydrolysis of ATP in three separate catalytic sites on the beta subunits. Contrary to the procyclic, insect form that requires F(1)F(o) ATP synthase for ATP synthesis, the bloodstream form relies on ATP hydrolysis by F(1)F(o) ATP synthase to maintain its mitochondrial membrane potential. The sequence is that of ATP synthase subunit gamma, mitochondrial from Trypanosoma brucei brucei.